Reading from the N-terminus, the 263-residue chain is Transmembrane protein 176B (263 aa).

4 consecutive transmembrane segments (helical) span residues 61–81 (LGVT…CLYF), 89–109 (ASGC…GIVI), 125–145 (LLLA…KSLI), and 197–217 (LFLA…VVSV). Positions 242-263 (KKLLGGDSAPASPTKEKIPVTP) are disordered. Phosphoserine is present on residues serine 249 and serine 253.

This sequence belongs to the TMEM176 family. In terms of tissue distribution, expressed in spleen by a variety of myeloid cells including macrophages and dendritic cells (at protein level). Ubiquitously expressed with higher expression in lymphoid tissues.

It is found in the nucleus membrane. Required for the development of cerebellar granule cells. May play a role in the process of maturation of dendritic cells. This chain is Transmembrane protein 176B (Tmem176b), found in Rattus norvegicus (Rat).